A 216-amino-acid polypeptide reads, in one-letter code: Large ribosomal subunit protein uL24m (216 aa).

The transit peptide at 1-9 directs the protein to the mitochondrion; that stretch reads MRLSALLAL. The residue at position 24 (Ser-24) is a Phosphoserine. One can recognise a KOW domain in the interval 56 to 89; sequence LFCGDMVEILEGKDAGKQGKVVQVVRQRNWVVLE.

The protein belongs to the universal ribosomal protein uL24 family. Component of the mitochondrial ribosome large subunit (39S) which comprises a 16S rRNA and about 50 distinct proteins.

The protein resides in the mitochondrion. This is Large ribosomal subunit protein uL24m (Mrpl24) from Mus musculus (Mouse).